A 293-amino-acid polypeptide reads, in one-letter code: MFSGSIVALVTPLDTDGEVDYTSLKNLVDYHINAGTDGIVAVGTTGESATLSVEEHVKLVMKTLEFSDGRIPVIAGTGANATHEAVTFSKLFRDSGVAGCLSVTPYYNKPTQEGLFLHYKAISESTDVPQILYNVPGRTAVDLLPETVARLAEFDNIVALKDATAELDRIAITRELCGDKFIQLSGDDATALEFVKMGGHGVISVTANVAAKDMATMFALAAQGKFEEAEIINQRLMPLHQDLFVEANPMPVKWATHRLGMITHPDIRLPLTELSHSAQPVVEQALIRAGVLK.

Pyruvate is bound at residue Thr-45. Catalysis depends on Tyr-133, which acts as the Proton donor/acceptor. Catalysis depends on Lys-161, which acts as the Schiff-base intermediate with substrate. Residue Ile-203 participates in pyruvate binding.

The protein belongs to the DapA family. In terms of assembly, homotetramer; dimer of dimers.

The protein localises to the cytoplasm. It catalyses the reaction L-aspartate 4-semialdehyde + pyruvate = (2S,4S)-4-hydroxy-2,3,4,5-tetrahydrodipicolinate + H2O + H(+). The protein operates within amino-acid biosynthesis; L-lysine biosynthesis via DAP pathway; (S)-tetrahydrodipicolinate from L-aspartate: step 3/4. In terms of biological role, catalyzes the condensation of (S)-aspartate-beta-semialdehyde [(S)-ASA] and pyruvate to 4-hydroxy-tetrahydrodipicolinate (HTPA). This Aliivibrio salmonicida (strain LFI1238) (Vibrio salmonicida (strain LFI1238)) protein is 4-hydroxy-tetrahydrodipicolinate synthase.